Here is a 444-residue protein sequence, read N- to C-terminus: DNA repair protein RadA (444 aa).

The segment at 10–27 (CQECGYKSVKWLGKCPSC) adopts a C4-type zinc-finger fold. An ATP-binding site is contributed by 91-98 (GEPGIGKS). A RadA KNRFG motif motif is present at residues 247-251 (KNRFG). The segment at 345–444 (DVFVNVAGGM…HIQEAIEVLF (100 aa)) is lon-protease-like.

It belongs to the RecA family. RadA subfamily.

In terms of biological role, DNA-dependent ATPase involved in processing of recombination intermediates, plays a role in repairing DNA breaks. Stimulates the branch migration of RecA-mediated strand transfer reactions, allowing the 3' invading strand to extend heteroduplex DNA faster. Binds ssDNA in the presence of ADP but not other nucleotides, has ATPase activity that is stimulated by ssDNA and various branched DNA structures, but inhibited by SSB. Does not have RecA's homology-searching function. The chain is DNA repair protein RadA from Aquifex aeolicus (strain VF5).